Here is a 168-residue protein sequence, read N- to C-terminus: Large ribosomal subunit protein uL10 (168 aa).

This sequence belongs to the universal ribosomal protein uL10 family. Part of the ribosomal stalk of the 50S ribosomal subunit. The N-terminus interacts with L11 and the large rRNA to form the base of the stalk. The C-terminus forms an elongated spine to which L12 dimers bind in a sequential fashion forming a multimeric L10(L12)X complex.

Forms part of the ribosomal stalk, playing a central role in the interaction of the ribosome with GTP-bound translation factors. This is Large ribosomal subunit protein uL10 (rplJ) from Mycoplasmopsis pulmonis (strain UAB CTIP) (Mycoplasma pulmonis).